We begin with the raw amino-acid sequence, 156 residues long: Cyanate hydratase (156 aa).

Residues Arg-96, Glu-99, and Ser-122 contribute to the active site.

Belongs to the cyanase family.

The enzyme catalyses cyanate + hydrogencarbonate + 3 H(+) = NH4(+) + 2 CO2. In terms of biological role, catalyzes the reaction of cyanate with bicarbonate to produce ammonia and carbon dioxide. This is Cyanate hydratase from Escherichia coli (strain K12 / DH10B).